A 218-amino-acid polypeptide reads, in one-letter code: Probable nicotinate-nucleotide adenylyltransferase (218 aa).

This sequence belongs to the NadD family.

The catalysed reaction is nicotinate beta-D-ribonucleotide + ATP + H(+) = deamido-NAD(+) + diphosphate. Its pathway is cofactor biosynthesis; NAD(+) biosynthesis; deamido-NAD(+) from nicotinate D-ribonucleotide: step 1/1. Catalyzes the reversible adenylation of nicotinate mononucleotide (NaMN) to nicotinic acid adenine dinucleotide (NaAD). This chain is Probable nicotinate-nucleotide adenylyltransferase, found in Acidithiobacillus ferrooxidans (strain ATCC 23270 / DSM 14882 / CIP 104768 / NCIMB 8455) (Ferrobacillus ferrooxidans (strain ATCC 23270)).